Here is a 122-residue protein sequence, read N- to C-terminus: UPF0102 protein TTE1452 (122 aa).

Belongs to the UPF0102 family.

In Caldanaerobacter subterraneus subsp. tengcongensis (strain DSM 15242 / JCM 11007 / NBRC 100824 / MB4) (Thermoanaerobacter tengcongensis), this protein is UPF0102 protein TTE1452.